Reading from the N-terminus, the 637-residue chain is Neuroendocrine convertase 2 (637 aa).

A signal peptide spans 1-24 (MEGGCGSQWKAAGLLFCVMVFASA). A propeptide spanning residues 25–108 (ERPVFTNHFL…QQEGFDRKKR (84 aa)) is cleaved from the precursor. Residues 128-452 (QWYLFNTGQA…YGVLDAGAMV (325 aa)) enclose the Peptidase S8 domain. Catalysis depends on charge relay system residues Asp-166 and His-207. 2 disulfides stabilise this stretch: Cys-224–Cys-375 and Cys-316–Cys-346. The N-linked (GlcNAc...) asparagine glycan is linked to Asn-374. Ser-383 acts as the Charge relay system in catalysis. A P/Homo B domain is found at 460 to 596 (TVPERFHCVG…TLMLHGTQSA (137 aa)). A disulfide bond links Cys-467 and Cys-493. Residues Asn-513 and Asn-523 are each glycosylated (N-linked (GlcNAc...) asparagine).

Belongs to the peptidase S8 family. Furin subfamily.

The protein resides in the cytoplasmic vesicle. The protein localises to the secretory vesicle. Its subcellular location is the secreted. The catalysed reaction is Release of protein hormones and neuropeptides from their precursors, generally by hydrolysis of -Lys-Arg-|- bonds.. In terms of biological role, serine endopeptidase which is involved in the processing of hormone and other protein precursors at sites comprised of pairs of basic amino acid residues. Responsible for the release of glucagon from proglucagon in pancreatic A cells. The chain is Neuroendocrine convertase 2 (Pcsk2) from Rattus norvegicus (Rat).